We begin with the raw amino-acid sequence, 535 residues long: MYHIFQISGEVIKGLGLKTKILITIVFSTLLILSVMLLSFSNNFNNKLFAATINDESETPGRDRLIGGLLTADFDEGSCLSRYHKTFLYRKPSPYKPSEYLVSKLRSYEMLHKRCGPGTKAYKEATKHLSHDENYNASKSDGECRYVVWLADYGLGNRLLTLASVFLYALLTDRIILVDNRKDIGDLLCEPFPGTSWLLPLDFPLMKYADGYHKGYSRCYGTMLENHSINSTSFPPHLYMHNLHDSRDSDKMFFCQKDQSLIDKVPWLIFRANVYFVPSLWFNPTFQTELTKLFPQKETVFHHLGRYLFHPKNQVWDIVTKYYHDHLSKADERLGIQIRVFRDQGGYYQHVMDQVISCTQREKLLPELATQEESKVNISNIPKSKAVLVTSLSPEYSKKLENMFSERANMTGEIIKVYQPSGERYQQTDKKVHDQKALAEMYLLSLTDNIVASSRSTFGYVAYSLGGLKPWLLYLPNDNKAPDPPCVRSTSMEPCFLTPPTHGCEPDAWGTESGKVVPFVRYCEDIWGLKLFDEL.

Residues 1-20 (MYHIFQISGEVIKGLGLKTK) are Cytoplasmic-facing. A helical; Signal-anchor for type II membrane protein transmembrane segment spans residues 21-41 (ILITIVFSTLLILSVMLLSFS). Residues 42-535 (NNFNNKLFAA…IWGLKLFDEL (494 aa)) lie on the Lumenal side of the membrane. Asn136, Asn226, Asn230, Asn377, and Asn409 each carry an N-linked (GlcNAc...) asparagine glycan.

This sequence belongs to the glycosyltransferase 37 family. Expressed in roots, stems, leaves, flowers, siliques and seedlings.

Its subcellular location is the golgi apparatus. The protein resides in the golgi stack membrane. It functions in the pathway protein modification; protein glycosylation. Its function is as follows. May be involved in cell wall biosynthesis. May act as a fucosyltransferase. This Arabidopsis thaliana (Mouse-ear cress) protein is Probable fucosyltransferase 4 (FUT4).